Here is a 328-residue protein sequence, read N- to C-terminus: Malate dehydrogenase (328 aa).

12–18 contributes to the NAD(+) binding site; sequence GAAGQIG. Substrate contacts are provided by arginine 95 and arginine 101. NAD(+) is bound by residues asparagine 108, glutamine 115, and 132–134; that span reads VGN. 2 residues coordinate substrate: asparagine 134 and arginine 165. Histidine 190 serves as the catalytic Proton acceptor.

It belongs to the LDH/MDH superfamily. MDH type 2 family.

It carries out the reaction (S)-malate + NAD(+) = oxaloacetate + NADH + H(+). Catalyzes the reversible oxidation of malate to oxaloacetate. The sequence is that of Malate dehydrogenase from Delftia acidovorans (strain DSM 14801 / SPH-1).